A 147-amino-acid polypeptide reads, in one-letter code: UPF0306 protein YhbP (147 aa).

Belongs to the UPF0306 family.

The protein is UPF0306 protein YhbP of Escherichia fergusonii (strain ATCC 35469 / DSM 13698 / CCUG 18766 / IAM 14443 / JCM 21226 / LMG 7866 / NBRC 102419 / NCTC 12128 / CDC 0568-73).